Here is a 146-residue protein sequence, read N- to C-terminus: Large ribosomal subunit protein uL15 (146 aa).

Residues 1–13 (MKLHELKAAEGSR) show a composition bias toward basic and acidic residues. A disordered region spans residues 1–51 (MKLHELKAAEGSRKVRNRVGRGTSSGNGKTSGRGQKGQKARSGGGVRLGFE). Composition is skewed to gly residues over residues 23–35 (TSSG…GRGQ) and 42–51 (SGGGVRLGFE).

Belongs to the universal ribosomal protein uL15 family. In terms of assembly, part of the 50S ribosomal subunit.

Functionally, binds to the 23S rRNA. The chain is Large ribosomal subunit protein uL15 from Streptococcus pyogenes serotype M1.